The following is a 321-amino-acid chain: Lipoyl synthase (321 aa).

[4Fe-4S] cluster contacts are provided by C68, C73, C79, C94, C98, C101, and S308. Positions F80 to T297 constitute a Radical SAM core domain.

Belongs to the radical SAM superfamily. Lipoyl synthase family. Requires [4Fe-4S] cluster as cofactor.

Its subcellular location is the cytoplasm. The catalysed reaction is [[Fe-S] cluster scaffold protein carrying a second [4Fe-4S](2+) cluster] + N(6)-octanoyl-L-lysyl-[protein] + 2 oxidized [2Fe-2S]-[ferredoxin] + 2 S-adenosyl-L-methionine + 4 H(+) = [[Fe-S] cluster scaffold protein] + N(6)-[(R)-dihydrolipoyl]-L-lysyl-[protein] + 4 Fe(3+) + 2 hydrogen sulfide + 2 5'-deoxyadenosine + 2 L-methionine + 2 reduced [2Fe-2S]-[ferredoxin]. It functions in the pathway protein modification; protein lipoylation via endogenous pathway; protein N(6)-(lipoyl)lysine from octanoyl-[acyl-carrier-protein]: step 2/2. In terms of biological role, catalyzes the radical-mediated insertion of two sulfur atoms into the C-6 and C-8 positions of the octanoyl moiety bound to the lipoyl domains of lipoate-dependent enzymes, thereby converting the octanoylated domains into lipoylated derivatives. This chain is Lipoyl synthase, found in Yersinia enterocolitica serotype O:8 / biotype 1B (strain NCTC 13174 / 8081).